The primary structure comprises 407 residues: Serine/threonine transporter SstT (407 aa).

Helical transmembrane passes span 12 to 32 (GNLI…GISS), 42 to 62 (LGIL…FILI), 81 to 101 (IIIL…LANF), 141 to 161 (ALSS…GIAL), 179 to 199 (VLKI…GLVA), 218 to 238 (ILLV…IVFF), 245 to 267 (FPLI…SSAA), 288 to 308 (ISIP…IAIL), and 330 to 350 (IIAT…LLLI).

This sequence belongs to the dicarboxylate/amino acid:cation symporter (DAACS) (TC 2.A.23) family.

Its subcellular location is the cell inner membrane. It carries out the reaction L-serine(in) + Na(+)(in) = L-serine(out) + Na(+)(out). The enzyme catalyses L-threonine(in) + Na(+)(in) = L-threonine(out) + Na(+)(out). Functionally, involved in the import of serine and threonine into the cell, with the concomitant import of sodium (symport system). The polypeptide is Serine/threonine transporter SstT (Campylobacter jejuni subsp. jejuni serotype O:6 (strain 81116 / NCTC 11828)).